Consider the following 190-residue polypeptide: Fe/S biogenesis protein NfuA (190 aa).

The [4Fe-4S] cluster site is built by Cys-148 and Cys-151.

This sequence belongs to the NfuA family. Homodimer. Requires [4Fe-4S] cluster as cofactor.

Its function is as follows. Involved in iron-sulfur cluster biogenesis. Binds a 4Fe-4S cluster, can transfer this cluster to apoproteins, and thereby intervenes in the maturation of Fe/S proteins. Could also act as a scaffold/chaperone for damaged Fe/S proteins. This is Fe/S biogenesis protein NfuA from Baumannia cicadellinicola subsp. Homalodisca coagulata.